We begin with the raw amino-acid sequence, 331 residues long: UDP-GalNAc:beta-1,3-N-acetylgalactosaminyltransferase 1 (331 aa).

Residues 1–20 are Cytoplasmic-facing; the sequence is MASALWTVLPSRMSLRSLKW. The helical; Signal-anchor for type II membrane protein transmembrane segment at 21–43 threads the bilayer; sequence SLLLLSLLSFFVMWYLSLPHYNV. Topologically, residues 44 to 331 are lumenal; that stretch reads IERVNWMYFY…VMLRNTTCHY (288 aa). N-linked (GlcNAc...) asparagine glycans are attached at residues Asn-72, Asn-154, Asn-198, Asn-212, and Asn-326.

Belongs to the glycosyltransferase 31 family. The cofactor is Mg(2+). Higher expression in heart and brain, and to a lesser extent in lung, placenta, kidney and testis. Lower expression in liver, spleen and stomach. No expression in skeletal muscle.

It is found in the golgi apparatus membrane. It carries out the reaction a globoside Gb3Cer (d18:1(4E)) + UDP-N-acetyl-alpha-D-galactosamine = a globoside Gb4Cer (d18:1(4E)) + UDP + H(+). It participates in protein modification; protein glycosylation. Transfers N-acetylgalactosamine onto globotriaosylceramide. Plays a critical role in preimplantation stage embryonic development. In Homo sapiens (Human), this protein is UDP-GalNAc:beta-1,3-N-acetylgalactosaminyltransferase 1.